The following is a 322-amino-acid chain: Sideroflexin-2 (322 aa).

Position 1 is an N-acetylmethionine (methionine 1). Helical transmembrane passes span 100–122, 142–164, 174–192, 228–250, and 265–287; these read MIIT…WQWV, SVRQ…AVGM, LVGR…CVNI, VVIS…MERL, and PLQV…GLFP.

This sequence belongs to the sideroflexin family. In terms of tissue distribution, widely expressed, highest levels in kidney, liver, and pancreas.

Its subcellular location is the mitochondrion inner membrane. The protein resides in the mitochondrion outer membrane. It carries out the reaction L-serine(in) = L-serine(out). Mitochondrial amino-acid transporter that mediates transport of serine into mitochondria. Involved in mitochondrial iron homeostasis by regulating heme biosynthesis. The polypeptide is Sideroflexin-2 (Homo sapiens (Human)).